The following is a 284-amino-acid chain: Protein Ku (284 aa).

One can recognise a Ku domain in the interval 10-189 (TIGLVTVPVK…ELRSTEGIVP (180 aa)).

As to quaternary structure, homodimer. Interacts with host LigD.

Functionally, required for replication of viruses with short cos ends (4 bases). Stimulates dsDNA end-joining by host LigD. Binds dsDNA with either blunt, 5'- or 3-overhangs, protecting it from host exonuclease degradation. The sequence is that of Protein Ku (87) from Mycobacterium phage Corndog (Mycobacteriophage Corndog).